Here is a 644-residue protein sequence, read N- to C-terminus: MFQDNPLLAQLKQQLHSQTPRAEGVVKATEKGFGFLEVDAQKSYFIPPPQMKKVMHGDRIIAVIHSEKERESAEPEELVEPFLTRFVGKVQGKNDRLAIVPDHPLLKDAIPCRAARGLNHEFKEGDWAVAEMRRHPLKGDRSFYAELTQYITFGDDHFVPWWVTLARHNLEKEAPDGVATEMLDEGLVREDLTALDFVTIDSASTEDMDDALFAKALPDGKLQLIVAIADPTAWIAEGSKLDKAAKIRAFTNYLPGFNIPMLPRELSDDLCSLRANEVRPVLACRMTLSTDGTIEDNIEFFAATIESKAKLVYDQVSDWLENTGDWQPESEAIAEQVRLLAQICQRRGEWRHNHALVFKDRPDYRFILGEKGEVLDIVAEPRRIANRIVEEAMIAANICAARVLRDKLGFGIYNVHMGFDPANADALAALLKTHGLHVDAEEVLTLDGFCKLRRELDAQPTGFLDSRIRRFQSFAEISTEPGPHFGLGLEAYATWTSPIRKYGDMINHRLLKAVIKGETATRPQDEITVQMAERRRLNRIAERDVGDWLYARFLKDKAGTDTRFAAEIVDISRGGMRVRLVDNGAIAFIPAPFLHAVRDELVCSQENGTVQIKGETAYKVTDVIDVTIAEVRMETRSIIARPVA.

The RNB domain occupies 189–516 (REDLTALDFV…NHRLLKAVIK (328 aa)). The S1 motif domain maps to 561–643 (DTRFAAEIVD…ETRSIIARPV (83 aa)).

The protein belongs to the RNR ribonuclease family. RNase II subfamily.

It localises to the cytoplasm. It carries out the reaction Exonucleolytic cleavage in the 3'- to 5'-direction to yield nucleoside 5'-phosphates.. Functionally, involved in mRNA degradation. Hydrolyzes single-stranded polyribonucleotides processively in the 3' to 5' direction. This chain is Exoribonuclease 2, found in Escherichia coli O127:H6 (strain E2348/69 / EPEC).